The sequence spans 181 residues: Mytilin-1 (181 aa).

The N-terminal stretch at 1–22 (MISKYCLFVIVLGTTGTALVLT) is a signal peptide.

Component of the organic matrix of calcified shell layers like nacre and prisms.

The protein localises to the secreted. The polypeptide is Mytilin-1 (Mytilus galloprovincialis (Mediterranean mussel)).